A 218-amino-acid chain; its full sequence is Putative transposase InsD for insertion element IS2E (218 aa).

One can recognise an Integrase catalytic domain in the interval 23 to 206 (KPAVPPSKRA…SPREYLRQRA (184 aa)).

Its function is as follows. Involved in the transposition of the insertion sequence IS2. This is Putative transposase InsD for insertion element IS2E (insD8) from Escherichia coli (strain K12).